A 329-amino-acid chain; its full sequence is Beta-ketoacyl-[acyl-carrier-protein] synthase III (329 aa).

Catalysis depends on residues Cys-114 and His-254. The segment at 255 to 259 is ACP-binding; it reads QANLR. The active site involves Asn-284.

The protein belongs to the thiolase-like superfamily. FabH family. As to quaternary structure, homodimer.

It is found in the cytoplasm. The enzyme catalyses malonyl-[ACP] + acetyl-CoA + H(+) = 3-oxobutanoyl-[ACP] + CO2 + CoA. It functions in the pathway lipid metabolism; fatty acid biosynthesis. Its function is as follows. Catalyzes the condensation reaction of fatty acid synthesis by the addition to an acyl acceptor of two carbons from malonyl-ACP. Catalyzes the first condensation reaction which initiates fatty acid synthesis and may therefore play a role in governing the total rate of fatty acid production. Possesses both acetoacetyl-ACP synthase and acetyl transacylase activities. Its substrate specificity determines the biosynthesis of branched-chain and/or straight-chain of fatty acids. This chain is Beta-ketoacyl-[acyl-carrier-protein] synthase III, found in Roseiflexus sp. (strain RS-1).